The chain runs to 985 residues: Ephrin type-B receptor 1-A (985 aa).

An N-terminal signal peptide occupies residues Met1–Ala19. Topologically, residues Val20 to Pro542 are extracellular. Residues Glu21–Gln203 enclose the Eph LBD domain. Fibronectin type-III domains lie at Val324–Ala434 and Ala435–Asp532. Residues Asn336, Asn428, and Asn482 are each glycosylated (N-linked (GlcNAc...) asparagine). A helical membrane pass occupies residues Leu543–Val563. Residues Cys564–Ala985 lie on the Cytoplasmic side of the membrane. The region spanning Val620–Ile883 is the Protein kinase domain. Residues Ile626–Val634 and Lys652 contribute to the ATP site. Catalysis depends on Asp745, which acts as the Proton acceptor. In terms of domain architecture, SAM spans Ser912 to Gln976. A PDZ-binding motif is present at residues Ser983–Ala985.

The protein belongs to the protein kinase superfamily. Tyr protein kinase family. Ephrin receptor subfamily. As to quaternary structure, heterotetramer upon binding of the ligand. The heterotetramer is composed of an ephrin dimer and a receptor dimer. Oligomerization is probably required to induce biological responses. Phosphorylated. Autophosphorylation is stimulated by ligands.

It localises to the cell membrane. Its subcellular location is the early endosome membrane. The protein resides in the cell projection. The protein localises to the dendrite. The catalysed reaction is L-tyrosyl-[protein] + ATP = O-phospho-L-tyrosyl-[protein] + ADP + H(+). Receptor tyrosine kinase which binds promiscuously transmembrane ephrin-B family ligands residing on adjacent cells, leading to contact-dependent bidirectional signaling into neighboring cells. The signaling pathway downstream of the receptor is referred to as forward signaling while the signaling pathway downstream of the ephrin ligand is referred to as reverse signaling. May play a role in axon guidance during nervous system development. May also play an important redundant role with other ephrin-B receptors in development and maturation of dendritic spines and synapse formation. More generally, may play a role in targeted cell migration and adhesion. Upon activation by ephrin-B ligands activates the MAPK/ERK and the JNK signaling cascades to regulate cell migration and adhesion respectively. This Xenopus laevis (African clawed frog) protein is Ephrin type-B receptor 1-A (ephb1-a).